The primary structure comprises 122 residues: MTSTVEFINRWQRIALLSQSLLELAQRGEWDLLLQQEVSYLQRIETVMEKQTPPGITRSIQDMVAGYIKQTLDNEQLLKGLLQQRLDELSSLIGQSTRQKSLNNAYGRLSGMLLVPDASGAS.

The tract at residues 1 to 50 (MTSTVEFINRWQRIALLSQSLLELAQRGEWDLLLQQEVSYLQRIETVMEK) is required for homodimerization. The segment at 60–98 (IQDMVAGYIKQTLDNEQLLKGLLQQRLDELSSLIGQSTR) is fliD binding.

This sequence belongs to the FliT family. Homodimer. Interacts with FliD and FlhC.

Its subcellular location is the cytoplasm. It is found in the cytosol. Dual-function protein that regulates the transcription of class 2 flagellar operons and that also acts as an export chaperone for the filament-capping protein FliD. As a transcriptional regulator, acts as an anti-FlhDC factor; it directly binds FlhC, thus inhibiting the binding of the FlhC/FlhD complex to class 2 promoters, resulting in decreased expression of class 2 flagellar operons. As a chaperone, effects FliD transition to the membrane by preventing its premature polymerization, and by directing it to the export apparatus. The protein is Flagellar protein FliT of Salmonella paratyphi A (strain AKU_12601).